Consider the following 222-residue polypeptide: MAEKPKLHYSNIRGRMESIRWLLAAAGVEFEEKFIKSAEDLDKLRNDGYLMFQQVPMVEIDGMKLVQTRAILNYIASKYNLYGKDIKEKALIDMYIEGIADLGEMILLLPFSQPEEQDAKLALIQEKTKNRYFPAFEKVLKSHGQDYLVGNKLSRADIHLVELLYYVEELDSSLISSFPLLKALKTRISNLPTVKKFLQPGSPRKPPMDEKSLEESRKIFRF.

Alanine 2 bears the N-acetylalanine mark. The GST N-terminal domain maps to 3–83 (EKPKLHYSNI…YIASKYNLYG (81 aa)). An N6-succinyllysine modification is found at lysine 4. Residues tyrosine 9, arginine 45, 54-55 (QV), and 67-68 (QT) contribute to the glutathione site. The 123-residue stretch at 85-207 (DIKEKALIDM…LQPGSPRKPP (123 aa)) folds into the GST C-terminal domain. The segment at 199-222 (QPGSPRKPPMDEKSLEESRKIFRF) is disordered. Positions 206-222 (PPMDEKSLEESRKIFRF) are enriched in basic and acidic residues.

It belongs to the GST superfamily. Alpha family. In terms of assembly, homodimer or heterodimer of GSTA1 and GSTA2. As to expression, liver.

The protein localises to the cytoplasm. It carries out the reaction RX + glutathione = an S-substituted glutathione + a halide anion + H(+). In terms of biological role, catalyzes the conjugation of glutathione to a large variety of electrophilic compounds. The chain is Glutathione S-transferase A2 (GSTA2) from Homo sapiens (Human).